The sequence spans 431 residues: tRNA(Ile)-lysidine synthase (431 aa).

Ser26 to Ser31 serves as a coordination point for ATP.

This sequence belongs to the tRNA(Ile)-lysidine synthase family.

The protein resides in the cytoplasm. The enzyme catalyses cytidine(34) in tRNA(Ile2) + L-lysine + ATP = lysidine(34) in tRNA(Ile2) + AMP + diphosphate + H(+). Ligates lysine onto the cytidine present at position 34 of the AUA codon-specific tRNA(Ile) that contains the anticodon CAU, in an ATP-dependent manner. Cytidine is converted to lysidine, thus changing the amino acid specificity of the tRNA from methionine to isoleucine. The sequence is that of tRNA(Ile)-lysidine synthase from Wolbachia sp. subsp. Brugia malayi (strain TRS).